A 392-amino-acid chain; its full sequence is Na(+)/H(+) antiporter NhaA 2 (392 aa).

Helical transmembrane passes span 20–40, 63–83, 99–119, 127–147, 158–178, 181–201, 209–229, 265–285, 298–318, 336–356, and 365–385; these read FFAA…AALI, VEHW…GLEI, ALPG…YVAF, IGGW…VLSL, IFLS…IALF, SDLS…LVAL, LLPY…SGIH, VAFA…LSGI, VALG…ALAI, GVAA…ALAF, and EVKV…VVVL.

Belongs to the NhaA Na(+)/H(+) (TC 2.A.33) antiporter family.

It is found in the cell inner membrane. The enzyme catalyses Na(+)(in) + 2 H(+)(out) = Na(+)(out) + 2 H(+)(in). Functionally, na(+)/H(+) antiporter that extrudes sodium in exchange for external protons. The polypeptide is Na(+)/H(+) antiporter NhaA 2 (Pseudomonas savastanoi pv. phaseolicola (strain 1448A / Race 6) (Pseudomonas syringae pv. phaseolicola (strain 1448A / Race 6))).